A 962-amino-acid chain; its full sequence is Glycine dehydrogenase (decarboxylating) (962 aa).

Lysine 709 is modified (N6-(pyridoxal phosphate)lysine).

Belongs to the GcvP family. As to quaternary structure, the glycine cleavage system is composed of four proteins: P, T, L and H. The cofactor is pyridoxal 5'-phosphate.

It carries out the reaction N(6)-[(R)-lipoyl]-L-lysyl-[glycine-cleavage complex H protein] + glycine + H(+) = N(6)-[(R)-S(8)-aminomethyldihydrolipoyl]-L-lysyl-[glycine-cleavage complex H protein] + CO2. Functionally, the glycine cleavage system catalyzes the degradation of glycine. The P protein binds the alpha-amino group of glycine through its pyridoxal phosphate cofactor; CO(2) is released and the remaining methylamine moiety is then transferred to the lipoamide cofactor of the H protein. The protein is Glycine dehydrogenase (decarboxylating) of Shewanella putrefaciens (strain CN-32 / ATCC BAA-453).